A 114-amino-acid chain; its full sequence is PDZK1-interacting protein 1 (114 aa).

The Extracellular segment spans residues 1-28; that stretch reads MSALSLLILGLLTAVPPASCQQGLGNLQ. Residues 29-51 traverse the membrane as a helical segment; sequence PWMQGLIAVAVFLVLVAIAFAVN. The Cytoplasmic portion of the chain corresponds to 52 to 114; the sequence is HFWCQEEPEP…EEGKVRSTPM (63 aa). Ser-85 bears the Phosphoserine mark. Positions 94–114 are disordered; sequence EHENAYENVPEEEGKVRSTPM. Positions 105–114 are enriched in basic and acidic residues; the sequence is EEGKVRSTPM.

It belongs to the PDZK1-interacting protein 1/SMIM24 family. In terms of assembly, forms a heterodimer (via N-terminal transmembrane helix) with SLC5A2/SGLT2 (via TM13); this interaction enhances SLC5A2 transporter activity. Interacts with PDZK1.

The protein localises to the apical cell membrane. Functionally, auxiliary protein of electrogenic Na(+)-coupled sugar symporter SLC5A2/SGLT2 and SLC5A1/SGLT1. Essential for the transporter activity of SLC5A2/SGLT2 but not SLC5A1/SGLT1. This Homo sapiens (Human) protein is PDZK1-interacting protein 1.